Consider the following 110-residue polypeptide: Large ribosomal subunit protein uL22 (110 aa).

The protein belongs to the universal ribosomal protein uL22 family. In terms of assembly, part of the 50S ribosomal subunit.

Functionally, this protein binds specifically to 23S rRNA; its binding is stimulated by other ribosomal proteins, e.g. L4, L17, and L20. It is important during the early stages of 50S assembly. It makes multiple contacts with different domains of the 23S rRNA in the assembled 50S subunit and ribosome. In terms of biological role, the globular domain of the protein is located near the polypeptide exit tunnel on the outside of the subunit, while an extended beta-hairpin is found that lines the wall of the exit tunnel in the center of the 70S ribosome. In Aliarcobacter butzleri (strain RM4018) (Arcobacter butzleri), this protein is Large ribosomal subunit protein uL22.